The following is a 544-amino-acid chain: Chaperonin GroEL (544 aa).

ATP is bound by residues 30–33, K51, 87–91, G415, and D495; these read TLGP and DGTTT.

It belongs to the chaperonin (HSP60) family. Forms a cylinder of 14 subunits composed of two heptameric rings stacked back-to-back. Interacts with the co-chaperonin GroES.

Its subcellular location is the cytoplasm. It catalyses the reaction ATP + H2O + a folded polypeptide = ADP + phosphate + an unfolded polypeptide.. Together with its co-chaperonin GroES, plays an essential role in assisting protein folding. The GroEL-GroES system forms a nano-cage that allows encapsulation of the non-native substrate proteins and provides a physical environment optimized to promote and accelerate protein folding. The protein is Chaperonin GroEL of Neisseria meningitidis serogroup B (strain ATCC BAA-335 / MC58).